A 488-amino-acid chain; its full sequence is Multidrug resistance outer membrane protein MdtP (488 aa).

Residues 1 to 23 (MINRQLSRLLLCSILGSTTLISG) form the signal peptide. Cysteine 24 carries N-palmitoyl cysteine lipidation. Residue cysteine 24 is the site of S-diacylglycerol cysteine attachment.

The protein belongs to the outer membrane factor (OMF) (TC 1.B.17) family. As to quaternary structure, could be part of a tripartite efflux system composed of MdtN, MdtO and MdtP.

It localises to the cell outer membrane. Its function is as follows. Could be involved in resistance to puromycin, acriflavine and tetraphenylarsonium chloride. This is Multidrug resistance outer membrane protein MdtP (mdtP) from Escherichia coli (strain K12).